We begin with the raw amino-acid sequence, 257 residues long: 3-methyl-2-oxobutanoate hydroxymethyltransferase (257 aa).

Mg(2+)-binding residues include D42 and D86. 3-methyl-2-oxobutanoate is bound by residues 42-43, D86, and K116; that span reads DS. E118 contacts Mg(2+). The active-site Proton acceptor is E185.

The protein belongs to the PanB family. Homodecamer; pentamer of dimers. It depends on Mg(2+) as a cofactor.

Its subcellular location is the cytoplasm. The enzyme catalyses 3-methyl-2-oxobutanoate + (6R)-5,10-methylene-5,6,7,8-tetrahydrofolate + H2O = 2-dehydropantoate + (6S)-5,6,7,8-tetrahydrofolate. It functions in the pathway cofactor biosynthesis; (R)-pantothenate biosynthesis; (R)-pantoate from 3-methyl-2-oxobutanoate: step 1/2. Functionally, catalyzes the reversible reaction in which hydroxymethyl group from 5,10-methylenetetrahydrofolate is transferred onto alpha-ketoisovalerate to form ketopantoate. In Prochlorococcus marinus (strain MIT 9515), this protein is 3-methyl-2-oxobutanoate hydroxymethyltransferase.